We begin with the raw amino-acid sequence, 402 residues long: uncharacterized protein (402 aa).

Helical transmembrane passes span 23–43 (IVSVVMFTFIGYLTIGIPLAV), 52–72 (LGYGSVLAGLVISLQYLATLL), 90–110 (VLYGMAGSAASGLFMLLSVAI), 121–141 (LLVGRLVLGAAESLVGSAAIG), 158–178 (WNGIASYGAIALGAPLGVLLV), 180–200 (WLGLWSMGASIVLLGALGFAL), 228–248 (GMGLALGAIGFGTIATFITLY), 255–275 (ANAVLCLSAFGGCFIGARLLF), 282–302 (LGGFRVAIICLGVESLGLLLL), 309–329 (WVGLAGAALTGFGFSLVFPAF), 351–371 (LFVDLSLGITGPLVGFVANLF), and 375–395 (SMFLFACLASLGGLALAVALH).

This sequence belongs to the major facilitator superfamily. YhhS family.

The protein resides in the cell inner membrane. This is an uncharacterized protein from Pseudomonas aeruginosa (strain ATCC 15692 / DSM 22644 / CIP 104116 / JCM 14847 / LMG 12228 / 1C / PRS 101 / PAO1).